A 729-amino-acid polypeptide reads, in one-letter code: MATVSTGSLIFIVKKNSPMMSKLVFFWQNREKEFRDFGGFSEKSVYFCDTIDNRKRLILVVINREVLLMTFDAIDQLAVNTVRTLSMDAIQAANSGHPGLPMGAAPMAYVLWNHFMNINPKTSRNWSNRDRFILSAGHGSAMLYSLLHLAGYDLSVEDLKNFRQWGSKTPGHPEVNHTDGVEATTGPLGQGIANAVGMAMAEAHLAAKFNKPGFDIVDHYTFALNGDGDLMEGVSQEAASMAGHLKLGKLVLLYDSNDISLDGPTSMAFTEDVKGRFEAYGWQHILVKDGNDLEEIAAAIEAAKAETEKPTIIEVKTIIGFGAEKQGTSAVHGAPLGAEGIAFAKKAYQWTHQDFEVPAEVTERFAQGLQARGEKAEQAWNDLFAAYQAEYPELAAEYQKAFANEAAQVELEAHELGSSMASRVSSQQAIQQISEQVASFWGGSADLSASNNTMVKAETDFQPGHYEGRNIWFGVREFAMAAAMNGIALHGGTRVYGGTFFVFSNYLLPAVRMAALQNLPTVYVMTHDSIAVGEDGPTHEPIEQLASVRSMPNLNVIRPADGNETNAAWKRAIAETDRPTMLVLTRQNLPVLEGTKELAEDGLNKGAYILSEAKGDLDGIIIATGSEVKLAMDTQEALEAEGIHVRVVSMPSQNIFDEQSAEYKESILPAAVTKRLAIEAGSSFGWAKYVGLAGKTLTIDTWGASAPGNRIFEEYGFTVANATELYKSL.

Position 97 (histidine 97) interacts with substrate. Thiamine diphosphate contacts are provided by residues histidine 138 and 186 to 188; that span reads GPL. Aspartate 227 serves as a coordination point for Mg(2+). Residues glycine 228 and asparagine 257 each contribute to the thiamine diphosphate site. Residues asparagine 257 and isoleucine 259 each coordinate Mg(2+). Positions 332, 423, and 450 each coordinate substrate. Thiamine diphosphate is bound at residue histidine 332. The active-site Proton donor is glutamate 477. A thiamine diphosphate-binding site is contributed by phenylalanine 503. 3 residues coordinate substrate: histidine 527, aspartate 535, and arginine 586.

Belongs to the transketolase family. As to quaternary structure, homodimer. Mg(2+) is required as a cofactor. Ca(2+) serves as cofactor. It depends on Mn(2+) as a cofactor. Requires Co(2+) as cofactor. The cofactor is thiamine diphosphate.

It catalyses the reaction D-sedoheptulose 7-phosphate + D-glyceraldehyde 3-phosphate = aldehydo-D-ribose 5-phosphate + D-xylulose 5-phosphate. Its function is as follows. Catalyzes the transfer of a two-carbon ketol group from a ketose donor to an aldose acceptor, via a covalent intermediate with the cofactor thiamine pyrophosphate. This Streptococcus pyogenes serotype M18 (strain MGAS8232) protein is Transketolase (tkt).